The primary structure comprises 542 residues: DNA-binding protein modulo (542 aa).

The interval 1-166 (MAQKKAVTVK…RGIPKVKVGK (166 aa)) is disordered. A phosphoserine mark is found at serine 42 and serine 44. The segment covering 59–114 (SEEDESDVEEQNDEQPGDDSDFETEEAAGLIDDEAEEDEEYNSDDEEDDDDDELEP) has biased composition (acidic residues). Phosphoserine occurs at positions 120, 129, and 142. Positions 123–135 (ADEVDESDDDEEA) are enriched in acidic residues. The span at 136–158 (PVEKPVSKKSEKANSEKSEENRG) shows a compositional bias: basic and acidic residues. 4 RRM domains span residues 175-251 (QIVF…QPRN), 258-331 (RTVV…RISQ), 340-429 (LTLV…NLTS), and 420-489 (RAIL…PNSL). Serine 304 carries the phosphoserine modification. A Phosphoserine; by PKA modification is found at serine 330. Serine 443 bears the Phosphoserine mark. A disordered region spans residues 505–542 (RAPRKFQKDTKPNFGKKPFNKRPAQENGGKSFVKRARF).

Post-translationally, the N-terminus is blocked.

Its subcellular location is the nucleus. In terms of biological role, its capacity to bind DNA and protein(s), and its differential expression during development suggest a role in the regulation of gene expression during Drosophila development. It could, in interaction with other factors, be required for the translation of instructions provided by pattern forming genes and controls, via chromatin changes, the activity of genes critical for the process of morphogenesis of several embryonic territories. This Drosophila melanogaster (Fruit fly) protein is DNA-binding protein modulo (mod).